The sequence spans 220 residues: Ribonuclease HII (220 aa).

Positions 32–220 (KHIVGIDEAG…FAPIKGRYSV (189 aa)) constitute an RNase H type-2 domain. A divalent metal cation contacts are provided by D38, E39, and D130.

The protein belongs to the RNase HII family. Requires Mn(2+) as cofactor. Mg(2+) serves as cofactor.

The protein resides in the cytoplasm. The enzyme catalyses Endonucleolytic cleavage to 5'-phosphomonoester.. In terms of biological role, endonuclease that specifically degrades the RNA of RNA-DNA hybrids. The sequence is that of Ribonuclease HII from Brucella anthropi (strain ATCC 49188 / DSM 6882 / CCUG 24695 / JCM 21032 / LMG 3331 / NBRC 15819 / NCTC 12168 / Alc 37) (Ochrobactrum anthropi).